The chain runs to 136 residues: Putative pre-16S rRNA nuclease (136 aa).

The protein belongs to the YqgF nuclease family.

The protein resides in the cytoplasm. Could be a nuclease involved in processing of the 5'-end of pre-16S rRNA. This Francisella tularensis subsp. mediasiatica (strain FSC147) protein is Putative pre-16S rRNA nuclease.